Here is a 103-residue protein sequence, read N- to C-terminus: uncharacterized protein (103 aa).

An N-terminal signal peptide occupies residues 1–13 (MLLSSIVSFVADA). N-linked (GlcNAc...) asparagine glycosylation is present at Asn67. Positions 73 to 103 (LSSDSNRNIIDNSNNNQHPSSSSTSTSWKKF) are disordered.

The protein localises to the secreted. This is an uncharacterized protein from Dictyostelium discoideum (Social amoeba).